The sequence spans 185 residues: Ribulose bisphosphate carboxylase small subunit, chloroplastic 2 (185 aa).

A chloroplast-targeting transit peptide spans 1–45 (MAAVIAKSSVSAAVARPARSSVRPMAALKPAVKAAPVAAPAQANQ). Position 46 is an N-methylmethionine (Met-46).

The protein belongs to the RuBisCO small chain family. As to quaternary structure, heterohexadecamer of 8 large and 8 small subunits.

The protein localises to the plastid. It is found in the chloroplast. Its subcellular location is the chloroplast stroma. Its function is as follows. RuBisCO catalyzes two reactions: the carboxylation of D-ribulose 1,5-bisphosphate, the primary event in carbon dioxide fixation, as well as the oxidative fragmentation of the pentose substrate. Both reactions occur simultaneously and in competition at the same active site. Although the small subunit is not catalytic it is essential for maximal activity. The polypeptide is Ribulose bisphosphate carboxylase small subunit, chloroplastic 2 (Chlamydomonas reinhardtii (Chlamydomonas smithii)).